Here is a 504-residue protein sequence, read N- to C-terminus: Occludin (504 aa).

Over 1–57 (MFSKKSYDGPPAGYGPPTGYGAPTADYGYGSPPPGSYYVDDAPQLFYKWTSPPGAVR) the chain is Cytoplasmic. Residues 51–253 (SPPGAVRGLQ…ICFFAQKTRS (203 aa)) enclose the MARVEL domain. Residues 58–80 (GLQAGVLVLCIAIFACVASTLAW) traverse the membrane as a helical segment. Topologically, residues 81-123 (DYGYGLGGAYGTGLGGFYGSNYYGSGLSYSYGYGGYYGGVNQR) are extracellular. A helical transmembrane segment spans residues 124–148 (TANGFMIAMAVLCFLAQLGLLVAAL). Topologically, residues 149-158 (SKSGATRSRR) are cytoplasmic. Residues 159–183 (FYLAVLVLSAVLAFVMLIASIVYIM) form a helical membrane-spanning segment. The Extracellular portion of the chain corresponds to 184–227 (GVNPQAQMSSGYYYSPLLAMCSQAYGSTYLNQYIYHYCTVDPQE). Cys204 and Cys221 form a disulfide bridge. A helical membrane pass occupies residues 228 to 249 (AVAAVCGFLIVILLCLICFFAQ). Topologically, residues 250–504 (KTRSKIWRYG…MVSAYDKVRG (255 aa)) are cytoplasmic. The segment at 324-396 (PSGTYSSRGD…VESSDERDQE (73 aa)) is disordered. Over residues 361–370 (PARRGRRRRR) the composition is skewed to basic residues. Phosphotyrosine is present on residues Tyr379 and Tyr383. Residues 379–385 (YETDYTT) form an interaction with TJP1 region. Residues 396–504 (EQWASLYPPI…MVSAYDKVRG (109 aa)) form the OCEL domain. Residues 412–471 (QRYKQEFDTDLKRYKQLCAEMDSINDRLNQLSRRLDSITEDSPQYQDVAEEYNQLKDLKR) are a coiled coil.

This sequence belongs to the ELL/occludin family. As to quaternary structure, interacts with TJP1 and TJP3. In terms of processing, phosphorylated. As to expression, localized at tight junctions of both epithelial and endothelial cells. Highly expressed in lung and liver. Expressed at a lower level in brain.

It localises to the cell membrane. Its subcellular location is the cell junction. The protein resides in the tight junction. May play a role in the formation and regulation of the tight junction (TJ) paracellular permeability barrier. Interacts with ZO-1. The sequence is that of Occludin (OCLN) from Gallus gallus (Chicken).